The primary structure comprises 134 residues: Submaxillary gland androgen-regulated protein 3A (134 aa).

An N-terminal signal peptide occupies residues 1-22 (MKSLTWILGLWALAACFTPGES). The interval 19–134 (PGESQRGPRG…TDPALPTPAP (116 aa)) is disordered. 3 stretches are compositionally biased toward pro residues: residues 28–43 (GPYPPGPLAPPPPPCF), 50–85 (VPPPHPPPYGPGRFPPPLSPPYGPGRIPPSPPPPYG), and 94–119 (LPPPYGPGYPQPPSQPRPYPPGPPFF).

The protein belongs to the PROL1/PROL3 family.

The protein resides in the secreted. In terms of biological role, may play a role in protection or detoxification. This is Submaxillary gland androgen-regulated protein 3A (SMR3A) from Homo sapiens (Human).